A 156-amino-acid polypeptide reads, in one-letter code: ATP synthase subunit b (156 aa).

Residues L12–A32 form a helical membrane-spanning segment.

It belongs to the ATPase B chain family. As to quaternary structure, F-type ATPases have 2 components, F(1) - the catalytic core - and F(0) - the membrane proton channel. F(1) has five subunits: alpha(3), beta(3), gamma(1), delta(1), epsilon(1). F(0) has three main subunits: a(1), b(2) and c(10-14). The alpha and beta chains form an alternating ring which encloses part of the gamma chain. F(1) is attached to F(0) by a central stalk formed by the gamma and epsilon chains, while a peripheral stalk is formed by the delta and b chains.

Its subcellular location is the cell inner membrane. Its function is as follows. F(1)F(0) ATP synthase produces ATP from ADP in the presence of a proton or sodium gradient. F-type ATPases consist of two structural domains, F(1) containing the extramembraneous catalytic core and F(0) containing the membrane proton channel, linked together by a central stalk and a peripheral stalk. During catalysis, ATP synthesis in the catalytic domain of F(1) is coupled via a rotary mechanism of the central stalk subunits to proton translocation. In terms of biological role, component of the F(0) channel, it forms part of the peripheral stalk, linking F(1) to F(0). The protein is ATP synthase subunit b of Stutzerimonas stutzeri (strain A1501) (Pseudomonas stutzeri).